Here is a 449-residue protein sequence, read N- to C-terminus: Probable glycine dehydrogenase (decarboxylating) subunit 1 (449 aa).

This sequence belongs to the GcvP family. N-terminal subunit subfamily. The glycine cleavage system is composed of four proteins: P, T, L and H. In this organism, the P 'protein' is a heterodimer of two subunits.

The enzyme catalyses N(6)-[(R)-lipoyl]-L-lysyl-[glycine-cleavage complex H protein] + glycine + H(+) = N(6)-[(R)-S(8)-aminomethyldihydrolipoyl]-L-lysyl-[glycine-cleavage complex H protein] + CO2. Functionally, the glycine cleavage system catalyzes the degradation of glycine. The P protein binds the alpha-amino group of glycine through its pyridoxal phosphate cofactor; CO(2) is released and the remaining methylamine moiety is then transferred to the lipoamide cofactor of the H protein. The polypeptide is Probable glycine dehydrogenase (decarboxylating) subunit 1 (Solibacter usitatus (strain Ellin6076)).